Reading from the N-terminus, the 233-residue chain is Phosphoribosylformylglycinamidine synthase subunit PurQ (233 aa).

Positions 3-233 constitute a Glutamine amidotransferase type-1 domain; it reads AAILVFPGIN…GLAQHLEKAA (231 aa). Residue cysteine 87 is the Nucleophile of the active site. Active-site residues include histidine 204 and glutamate 206.

Part of the FGAM synthase complex composed of 1 PurL, 1 PurQ and 2 PurS subunits.

The protein localises to the cytoplasm. It carries out the reaction N(2)-formyl-N(1)-(5-phospho-beta-D-ribosyl)glycinamide + L-glutamine + ATP + H2O = 2-formamido-N(1)-(5-O-phospho-beta-D-ribosyl)acetamidine + L-glutamate + ADP + phosphate + H(+). It catalyses the reaction L-glutamine + H2O = L-glutamate + NH4(+). It functions in the pathway purine metabolism; IMP biosynthesis via de novo pathway; 5-amino-1-(5-phospho-D-ribosyl)imidazole from N(2)-formyl-N(1)-(5-phospho-D-ribosyl)glycinamide: step 1/2. Functionally, part of the phosphoribosylformylglycinamidine synthase complex involved in the purines biosynthetic pathway. Catalyzes the ATP-dependent conversion of formylglycinamide ribonucleotide (FGAR) and glutamine to yield formylglycinamidine ribonucleotide (FGAM) and glutamate. The FGAM synthase complex is composed of three subunits. PurQ produces an ammonia molecule by converting glutamine to glutamate. PurL transfers the ammonia molecule to FGAR to form FGAM in an ATP-dependent manner. PurS interacts with PurQ and PurL and is thought to assist in the transfer of the ammonia molecule from PurQ to PurL. The polypeptide is Phosphoribosylformylglycinamidine synthase subunit PurQ (Bradyrhizobium diazoefficiens (strain JCM 10833 / BCRC 13528 / IAM 13628 / NBRC 14792 / USDA 110)).